The primary structure comprises 207 residues: Ras-related protein Rab-7a (207 aa).

At Thr-2 the chain carries N-acetylthreonine. Residues Ser-17, Gly-18, Val-19, Gly-20, Lys-21, Thr-22, Ser-23, Ser-34, Asn-35, Tyr-37, and Thr-40 each coordinate GTP. Thr-22 serves as a coordination point for Mg(2+). The Switch 1 motif lies at 28 to 41; that stretch reads YVNKKFSNQYKATI. Thr-40 and Asp-63 together coordinate Mg(2+). Gly-66 lines the GTP pocket. The short motif at 67–82 is the Switch 2 element; it reads QERFQSLGVAFYRGAD. Ser-72 is modified (phosphoserine). 5 residues coordinate GTP: Asn-125, Lys-126, Asp-128, Ala-156, and Lys-157. Residues Lys-191 and Lys-194 each participate in a glycyl lysine isopeptide (Lys-Gly) (interchain with G-Cter in ubiquitin) cross-link. Residues Cys-205 and Cys-207 are each lipidated (S-geranylgeranyl cysteine). Position 207 is a cysteine methyl ester (Cys-207).

The protein belongs to the small GTPase superfamily. Rab family. Interacts with NTRK1/TRKA, RILP, PSMA7, RNF115 and FYCO1. Interacts with the PIK3C3/VPS34-PIK3R4 complex. The GTP-bound form interacts with OSBPL1A and RAC1. Interacts with CLN3. Interacts with CHM, the substrate-binding subunit of the Rab geranylgeranyltransferase complex. Interacts with C9orf72. Does not interact with HPS4 and the BLOC-3 complex (heterodimer of HPS1 and HPS4). Interacts with CLN5. Interacts with PLEKHM1 (via N- and C-terminus). Interacts with PRPH; the interaction is direct. Interacts with VPS13A. The GDP-bound form interacts with RIMOC1. Interacts with the MON1A-CCZ1B complex and this interaction is enhanced in the presence of RIMOC1. Interacts with VPS39 and VPS41. Forms a ternary complex with LAMP2 and RUFY4; the interaction with LAMP2 is mediated by RUFY4 (via RUN and coiled coil domains). Mg(2+) is required as a cofactor. Deubiquitination at Lys-191 and Lys-194 by USP32. Post-translationally, phosphorylated at Ser-72 by LRRK1; phosphorylation is dependent on protein kinase C (PKC) activation of LRRK1. In terms of processing, prenylated. Prenylation is required for association with cellular membranes. Widely expressed. High expression in liver, heart and kidney. Found in sensory and motor neurons.

Its subcellular location is the cytoplasmic vesicle. It is found in the phagosome membrane. The protein resides in the late endosome membrane. It localises to the lysosome membrane. The protein localises to the melanosome membrane. Its subcellular location is the autophagosome membrane. It is found in the lipid droplet. The protein resides in the endosome membrane. It localises to the mitochondrion membrane. It carries out the reaction GTP + H2O = GDP + phosphate + H(+). With respect to regulation, regulated by guanine nucleotide exchange factors (GEFs) which promote the exchange of bound GDP for free GTP. Regulated by GTPase activating proteins (GAPs) which increase the GTP hydrolysis activity. Inhibited by GDP dissociation inhibitors (GDIs). In terms of biological role, the small GTPases Rab are key regulators of intracellular membrane trafficking, from the formation of transport vesicles to their fusion with membranes. Rabs cycle between an inactive GDP-bound form and an active GTP-bound form that is able to recruit to membranes different sets of downstream effectors directly responsible for vesicle formation, movement, tethering and fusion. In its active state, RAB7A binds to a variety of effector proteins playing a key role in the regulation of endo-lysosomal trafficking. Governs early-to-late endosomal maturation, microtubule minus-end as well as plus-end directed endosomal migration and positioning, and endosome-lysosome transport through different protein-protein interaction cascades. Also plays a central role in growth-factor-mediated cell signaling, nutrient-transporter-mediated nutrient uptake, neurotrophin transport in the axons of neurons and lipid metabolism. Also involved in regulation of some specialized endosomal membrane trafficking, such as maturation of melanosomes, pathogen-induced phagosomes (or vacuoles) and autophagosomes. Plays a role in the maturation and acidification of phagosomes that engulf pathogens, such as S.aureus and Mycobacteria. Plays a role in the fusion of phagosomes with lysosomes. In concert with RAC1, plays a role in regulating the formation of RBs (ruffled borders) in osteoclasts. Controls the endosomal trafficking and neurite outgrowth signaling of NTRK1/TRKA. Regulates the endocytic trafficking of the EGF-EGFR complex by regulating its lysosomal degradation. Involved in the ADRB2-stimulated lipolysis through lipophagy, a cytosolic lipase-independent autophagic pathway. Required for the exosomal release of SDCBP, CD63 and syndecan. Required for vesicular trafficking and cell surface expression of ACE2. May play a role in PRPH neuronal intermediate filament assembly. The chain is Ras-related protein Rab-7a from Mus musculus (Mouse).